The following is a 147-amino-acid chain: 3-dehydroquinate dehydratase (147 aa).

The active-site Proton acceptor is Tyr22. Substrate contacts are provided by Asn76, His82, and Asp89. Residue His102 is the Proton donor of the active site. Substrate contacts are provided by residues 103 to 104 (IS) and Arg113.

This sequence belongs to the type-II 3-dehydroquinase family. As to quaternary structure, homododecamer.

The catalysed reaction is 3-dehydroquinate = 3-dehydroshikimate + H2O. It functions in the pathway metabolic intermediate biosynthesis; chorismate biosynthesis; chorismate from D-erythrose 4-phosphate and phosphoenolpyruvate: step 3/7. Catalyzes a trans-dehydration via an enolate intermediate. The sequence is that of 3-dehydroquinate dehydratase from Fusobacterium nucleatum subsp. nucleatum (strain ATCC 25586 / DSM 15643 / BCRC 10681 / CIP 101130 / JCM 8532 / KCTC 2640 / LMG 13131 / VPI 4355).